Reading from the N-terminus, the 281-residue chain is Ermin (281 aa).

3 stretches are compositionally biased toward polar residues: residues 1–12 (MTDTPETLSGTE), 21–31 (NGQQPSSQTRQ), and 135–147 (AQQQLEQRGDAST). 3 disordered regions span residues 1–80 (MTDT…KILN), 110–147 (REGHPWKKIPPNSSNLEVSRQKERTAQQQLEQRGDAST), and 167–248 (KCDE…GDIA). Positions 169–197 (DEEEEEEEEVWNEEINEEDVDECAEEEDE) are enriched in acidic residues. A compositionally biased stretch (basic and acidic residues) spans 198–223 (VRVIEFKRKHREGSPLKEESLAREDS). Phosphoserine occurs at positions 211, 223, 227, and 230. Thr-234 bears the Phosphothreonine mark. Positions 262 to 281 (KIRKGNTKQRIDEFESMMHL) are binds actin.

Binds actin. In terms of tissue distribution, brain and spinal cord. Exclusively expressed by the oligodendrocytes. Appears at a late stage during myelination, and in the mature nerves, it is localized to the outer cytoplasmic lip of the myelin sheath and the paranodal loops.

Its subcellular location is the cytoplasm. The protein resides in the cytoskeleton. Its function is as follows. Plays a role in cytoskeletal rearrangements during the late wrapping and/or compaction phases of myelinogenesis as well as in maintenance and stability of myelin sheath in the adult. May play an important role in late-stage oligodendroglia maturation, myelin/Ranvier node formation during CNS development, and in the maintenance and plasticity of related structures in the mature CNS. The protein is Ermin (Ermn) of Mus musculus (Mouse).